Consider the following 142-residue polypeptide: Large ribosomal subunit protein uL11 (142 aa).

Belongs to the universal ribosomal protein uL11 family. In terms of assembly, part of the ribosomal stalk of the 50S ribosomal subunit. Interacts with L10 and the large rRNA to form the base of the stalk. L10 forms an elongated spine to which L12 dimers bind in a sequential fashion forming a multimeric L10(L12)X complex. In terms of processing, one or more lysine residues are methylated.

Forms part of the ribosomal stalk which helps the ribosome interact with GTP-bound translation factors. The protein is Large ribosomal subunit protein uL11 of Xanthomonas campestris pv. campestris (strain B100).